Here is a 153-residue protein sequence, read N- to C-terminus: MNARRRLWSVLMLILAVGTAATLTIMALRHNLTYLYMPSEVLRGDTAQQTHFRLGGIVEKGSFQRTSGTLNTRFIVTDGNARLQVRYARILPDLFREGQAIVATGQMQHGTFIAENILARHNETYTPRQLANKMQPTPTQHTHLDTPIAETTP.

The Cytoplasmic portion of the chain corresponds to 1–6 (MNARRR). Residues 7 to 27 (LWSVLMLILAVGTAATLTIMA) traverse the membrane as a helical; Signal-anchor for type II membrane protein segment. Over 28 to 153 (LRHNLTYLYM…LDTPIAETTP (126 aa)) the chain is Periplasmic. Residues H121 and Y125 each contribute to the heme site. Residues 131–141 (ANKMQPTPTQH) are compositionally biased toward polar residues. A disordered region spans residues 131-153 (ANKMQPTPTQHTHLDTPIAETTP).

The protein belongs to the CcmE/CycJ family.

The protein localises to the cell inner membrane. Functionally, heme chaperone required for the biogenesis of c-type cytochromes. Transiently binds heme delivered by CcmC and transfers the heme to apo-cytochromes in a process facilitated by CcmF and CcmH. The polypeptide is Cytochrome c-type biogenesis protein CcmE (Xylella fastidiosa (strain Temecula1 / ATCC 700964)).